Here is a 489-residue protein sequence, read N- to C-terminus: Cytochrome P450 monooxygenase ataF (489 aa).

Residues 12–32 (WLEHSAVIATLFAFGTALFLV) form a helical membrane-spanning segment. Asn-289 is a glycosylation site (N-linked (GlcNAc...) asparagine). Cys-434 contacts heme.

This sequence belongs to the cytochrome P450 family. Requires heme as cofactor.

The protein resides in the membrane. Its pathway is mycotoxin biosynthesis. In terms of biological role, cytochrome P450 monooxygenase; part of the gene cluster that mediates the biosynthesis of acetylaranotin, a member of the epipolythiodioxopiperazine (ETP) class of toxins characterized by a disulfide-bridged cyclic dipeptide. The first step of acetylaranotin biosynthesis is performed by the NRPS ataP which produces diketopiperazine cyclo-L-Phe-L-Phe via the condensation of 2 phenylalanines (L-Phe). The ataC domain of ataTC then catalyzes the formation of bishydroxylation of cyclo-L-Phe-L-Phe. The glutathione S-transferase domain ataG in ataIMG further catalyzes the conjugation of two glutathiones to the bishydroxylated intermediate. Next, the dipeptidase ataJ removes the Glu residues. The following step is performed by the carbon sulfur lyase domain ataI of ataIMG which may convert the bis-cysteinyl adduct to yield an epidithiol intermediate. The ataT domain from ataTC then catalyzes the oxidation of the free dithiols, followed by a cyclization step catalyzed by the cytochrome P450 ataF. AtaF probably acts as an epoxidase to promote a dual epoxidation formation at C8 and C9 along with C8' and C9', followed by the spontaneous nucleophilic attack of the amide nitrogens N10 and N10' to yield an intermediate with the pyrrolidine partial structure. The final steps of acetylaranotin biosynthesis involve the acetylation and ring rearrangement of an epitetrathiodiketopiperazine intermediate to produce acetylaranotin. AtaH probably catalyzes the acetylation of epitetrathiodiketopiperazine to produce a diacetate and ataY is responsible for the formation of the dihydrooxepin moiety that converts the diacetate intermediate to acetylaranotin via acetylapoaranotin. Both enzymes could function independently in the absence of the other. The acetylaranotin bis-thiomethyltransferase ataS located outside of acetylaranotin gene cluster is the main thiomethyltransferase responsible for converting acetylaranotin and its related intermediates to their methylated forms. The protein is Cytochrome P450 monooxygenase ataF of Aspergillus terreus (strain NIH 2624 / FGSC A1156).